The primary structure comprises 307 residues: Pantothenate kinase (307 aa).

ATP is bound at residue 90-97 (GSVAVGKS).

The protein belongs to the prokaryotic pantothenate kinase family.

The protein localises to the cytoplasm. The catalysed reaction is (R)-pantothenate + ATP = (R)-4'-phosphopantothenate + ADP + H(+). Its pathway is cofactor biosynthesis; coenzyme A biosynthesis; CoA from (R)-pantothenate: step 1/5. The protein is Pantothenate kinase of Enterococcus faecalis (strain ATCC 700802 / V583).